A 396-amino-acid chain; its full sequence is Major outer membrane porin, serovar A (396 aa).

The N-terminal stretch at 1-22 (MKKLLKSVLVFAALSSASSLQA) is a signal peptide.

This sequence belongs to the chlamydial porin (CP) (TC 1.B.2) family. As to quaternary structure, part of a disulfide cross-linked outer membrane complex (COMC) composed of the major outer membrane porin (MOMP), the small cysteine-rich protein (OmcA) and the large cysteine-rich periplasmic protein (OmcB).

The protein resides in the cell outer membrane. In elementary bodies (EBs, the infectious stage, which is able to survive outside the host cell) provides the structural integrity of the outer envelope through disulfide cross-links with the small cysteine-rich protein and the large cysteine-rich periplasmic protein. It has been described in publications as the Sarkosyl-insoluble COMC (Chlamydia outer membrane complex), and serves as the functional equivalent of peptidoglycan. Functionally, permits diffusion of specific solutes through the outer membrane. This is Major outer membrane porin, serovar A (ompA) from Chlamydia trachomatis.